The primary structure comprises 205 residues: GTP cyclohydrolase-2 (205 aa).

Arg49–Glu53 contacts GTP. 3 residues coordinate Zn(2+): Cys54, Cys65, and Cys67. GTP contacts are provided by residues Gln70, Glu92–Arg94, and Thr114. The active-site Proton acceptor is Asp126. The active-site Nucleophile is Arg128. GTP contacts are provided by Thr149 and Lys154.

Belongs to the GTP cyclohydrolase II family. Requires Zn(2+) as cofactor.

The enzyme catalyses GTP + 4 H2O = 2,5-diamino-6-hydroxy-4-(5-phosphoribosylamino)-pyrimidine + formate + 2 phosphate + 3 H(+). The protein operates within cofactor biosynthesis; riboflavin biosynthesis; 5-amino-6-(D-ribitylamino)uracil from GTP: step 1/4. In terms of biological role, catalyzes the conversion of GTP to 2,5-diamino-6-ribosylamino-4(3H)-pyrimidinone 5'-phosphate (DARP), formate and pyrophosphate. The chain is GTP cyclohydrolase-2 from Shewanella woodyi (strain ATCC 51908 / MS32).